The primary structure comprises 93 residues: Auxin-induced protein 10A5 (93 aa).

Belongs to the ARG7 family.

The chain is Auxin-induced protein 10A5 from Glycine max (Soybean).